The primary structure comprises 693 residues: Phosphoribosylformylglycinamidine synthase subunit PurL (693 aa).

His-34 is an active-site residue. ATP-binding residues include Tyr-37 and Lys-76. Glu-78 is a binding site for Mg(2+). Substrate-binding positions include 79–82 and Arg-101; that span reads SHNH. His-80 functions as the Proton acceptor in the catalytic mechanism. Asp-102 contributes to the Mg(2+) binding site. Gln-222 lines the substrate pocket. Asp-248 lines the Mg(2+) pocket. 292-294 contacts substrate; that stretch reads ETQ. ATP-binding residues include Asp-470 and Gly-507. A substrate-binding site is contributed by Ser-510.

It belongs to the FGAMS family. Monomer. Part of the FGAM synthase complex composed of 1 PurL, 1 PurQ and 2 PurS subunits.

The protein resides in the cytoplasm. It catalyses the reaction N(2)-formyl-N(1)-(5-phospho-beta-D-ribosyl)glycinamide + L-glutamine + ATP + H2O = 2-formamido-N(1)-(5-O-phospho-beta-D-ribosyl)acetamidine + L-glutamate + ADP + phosphate + H(+). The protein operates within purine metabolism; IMP biosynthesis via de novo pathway; 5-amino-1-(5-phospho-D-ribosyl)imidazole from N(2)-formyl-N(1)-(5-phospho-D-ribosyl)glycinamide: step 1/2. In terms of biological role, part of the phosphoribosylformylglycinamidine synthase complex involved in the purines biosynthetic pathway. Catalyzes the ATP-dependent conversion of formylglycinamide ribonucleotide (FGAR) and glutamine to yield formylglycinamidine ribonucleotide (FGAM) and glutamate. The FGAM synthase complex is composed of three subunits. PurQ produces an ammonia molecule by converting glutamine to glutamate. PurL transfers the ammonia molecule to FGAR to form FGAM in an ATP-dependent manner. PurS interacts with PurQ and PurL and is thought to assist in the transfer of the ammonia molecule from PurQ to PurL. The protein is Phosphoribosylformylglycinamidine synthase subunit PurL of Pyrobaculum neutrophilum (strain DSM 2338 / JCM 9278 / NBRC 100436 / V24Sta) (Thermoproteus neutrophilus).